The primary structure comprises 108 residues: Putative bolA-like protein K11H12.1 (108 aa).

The tract at residues Ser89–Lys108 is disordered.

The protein belongs to the BolA/IbaG family.

The chain is Putative bolA-like protein K11H12.1 from Caenorhabditis elegans.